The sequence spans 35 residues: N-acylglucosamine 2-epimerase (35 aa).

The interval 1–21 is leucine-zipper; that stretch reads LNLVDQLGEADEELAGTYAEL.

It belongs to the N-acylglucosamine 2-epimerase family. As to quaternary structure, homodimer. Forms a heterodimer with renin and inhibits its activity.

The catalysed reaction is an N-acyl-D-glucosamine = an N-acyl-D-mannosamine. The protein operates within amino-sugar metabolism; N-acetylneuraminate degradation. Catalyzes the interconversion of N-acetylglucosamine to N-acetylmannosamine. Involved in the N-glycolylneuraminic acid (Neu5Gc) degradation pathway. This is N-acylglucosamine 2-epimerase from Canis lupus familiaris (Dog).